The sequence spans 150 residues: MKEMVDYGIIGFLIFLSVIVIAIAIERLWFFATLRVDDYTDRRKLELALHKRLTLVATIGSNAPYIGLLGTVMGIMLTFMDLGSASGIDTKAIMTNLALALKATGMGLLVAIPAIVIYNLLVRKSEILVTKWDIFHHPVDTQSHEVYSKA.

3 consecutive transmembrane segments (helical) span residues 5–25 (VDYGIIGFLIFLSVIVIAIAI), 63–83 (APYIGLLGTVMGIMLTFMDLG), and 97–117 (LALALKATGMGLLVAIPAIVI).

This sequence belongs to the ExbB/TolQ family.

It is found in the cell inner membrane. This Helicobacter pylori (strain J99 / ATCC 700824) (Campylobacter pylori J99) protein is Putative biopolymer transport protein ExbB-like 2.